We begin with the raw amino-acid sequence, 412 residues long: Angiopoietin-related protein 4 (412 aa).

A signal peptide spans 1 to 23; sequence MRSAPTARAALVLCAATAGLLSA. The stretch at 106–153 forms a coiled coil; the sequence is ETLHSLQTQLKAQNSKIQQLFQKVAQQQRHLEKQHLRIQNLQGQLDHL. N183 carries an N-linked (GlcNAc...) asparagine glycan. In terms of domain architecture, Fibrinogen C-terminal spans 185 to 407; sequence SRLHRLPRDC…ATTMLIQPTV (223 aa). Disulfide bonds link C194–C222 and C347–C360.

In terms of assembly, homooligomer; disulfide-linked via Cys residues in the N-terminal part of the protein. The homooligomer undergoes proteolytic processing to release the ANGPTL4 C-terminal chain, which circulates as a monomer. The homooligomer unprocessed form is able to interact with the extracellular matrix. Post-translationally, N-glycosylated. In terms of processing, forms disulfide-linked dimers and tetramers. Cleaved into a smaller N-terminal chain and a larger chain that contains the fibrinogen C-terminal domain; both cleaved and uncleaved forms are detected in the extracellular space. The cleaved form is not present within the cell.

The protein resides in the secreted. Its subcellular location is the extracellular space. It localises to the extracellular matrix. In terms of biological role, mediates inactivation of the lipoprotein lipase LPL, and thereby plays a role in the regulation of triglyceride clearance from the blood serum and in lipid metabolism. May also play a role in regulating glucose homeostasis and insulin sensitivity. Inhibits proliferation, migration, and tubule formation of endothelial cells and reduces vascular leakage. Upon heterologous expression, inhibits the adhesion of endothelial cell to the extracellular matrix (ECM), and inhibits the reorganization of the actin cytoskeleton, formation of actin stress fibers and focal adhesions in endothelial cells that have adhered to ANGPTL4-containing ECM (in vitro). Depending on context, may modulate tumor-related angiogenesis. Mediates inactivation of the lipoprotein lipase LPL, and thereby plays an important role in the regulation of triglyceride clearance from the blood serum and in lipid metabolism. Has higher activity in LPL inactivation than the uncleaved protein. The sequence is that of Angiopoietin-related protein 4 (ANGPTL4) from Sus scrofa (Pig).